The following is a 54-amino-acid chain: Hemolytic toxin (54 aa).

The tract at residues 3 to 12 (ALAGTIIAGA) is plays an important role in the hemolytic activity. Residues 11–30 (GASLGFQILDKVLGELGKVS) form an N-terminal region region.

It belongs to the actinoporin family. Sea anemone subfamily. Octamer or nonamer in membranes. Monomer in the soluble state.

The protein resides in the secreted. Its subcellular location is the nematocyst. It is found in the target cell membrane. Its function is as follows. Pore-forming protein that forms cations-selective hydrophilic pores of around 1 nm and causes cytolysis. Pore formation is a multi-step process that involves specific recognition of membrane sphingomyelin (but neither cholesterol nor phosphatidylcholine) using aromatic rich region and adjacent phosphocholine (POC) binding site, firm binding to the membrane (mainly driven by hydrophobic interactions) accompanied by the transfer of the N-terminal region to the lipid-water interface and finally pore formation after oligomerization of monomers. The polypeptide is Hemolytic toxin (Heteractis magnifica (Magnificent sea anemone)).